The chain runs to 166 residues: Phosphopantetheine adenylyltransferase (166 aa).

A substrate-binding site is contributed by Ser10. Residues 10-11 (SF) and His18 contribute to the ATP site. The substrate site is built by Lys42, Ala79, and Arg93. ATP is bound by residues 94–96 (GLR), Glu104, and 129–135 (VRPITAT).

The protein belongs to the bacterial CoaD family. In terms of assembly, homohexamer. Requires Mg(2+) as cofactor.

It is found in the cytoplasm. The catalysed reaction is (R)-4'-phosphopantetheine + ATP + H(+) = 3'-dephospho-CoA + diphosphate. The protein operates within cofactor biosynthesis; coenzyme A biosynthesis; CoA from (R)-pantothenate: step 4/5. In terms of biological role, reversibly transfers an adenylyl group from ATP to 4'-phosphopantetheine, yielding dephospho-CoA (dPCoA) and pyrophosphate. The chain is Phosphopantetheine adenylyltransferase from Methylobacterium nodulans (strain LMG 21967 / CNCM I-2342 / ORS 2060).